The chain runs to 483 residues: ATP synthase subunit beta (483 aa).

169 to 176 is a binding site for ATP; that stretch reads GGAGVGKT.

Belongs to the ATPase alpha/beta chains family. As to quaternary structure, F-type ATPases have 2 components, CF(1) - the catalytic core - and CF(0) - the membrane proton channel. CF(1) has five subunits: alpha(3), beta(3), gamma(1), delta(1), epsilon(1). CF(0) has three main subunits: a(1), b(2) and c(9-12). The alpha and beta chains form an alternating ring which encloses part of the gamma chain. CF(1) is attached to CF(0) by a central stalk formed by the gamma and epsilon chains, while a peripheral stalk is formed by the delta and b chains.

It localises to the cell membrane. The catalysed reaction is ATP + H2O + 4 H(+)(in) = ADP + phosphate + 5 H(+)(out). Produces ATP from ADP in the presence of a proton gradient across the membrane. The catalytic sites are hosted primarily by the beta subunits. This Rhodococcus erythropolis (strain PR4 / NBRC 100887) protein is ATP synthase subunit beta.